A 169-amino-acid chain; its full sequence is Disulfide bond formation protein B 1 (169 aa).

Residues Met1 to Tyr14 are Cytoplasmic-facing. The helical transmembrane segment at Leu15–Tyr31 threads the bilayer. The Periplasmic portion of the chain corresponds to Met32–Tyr49. Cys41 and Cys44 are disulfide-bonded. The chain crosses the membrane as a helical span at residues Ala50–Met64. At Arg65–Thr71 the chain is on the cytoplasmic side. A helical transmembrane segment spans residues Val72–Gly89. Residues His90–Gln144 lie on the Periplasmic side of the membrane. Cys102 and Cys130 form a disulfide bridge. Residues Trp145–Arg163 form a helical membrane-spanning segment. At Asn164–Arg169 the chain is on the cytoplasmic side.

This sequence belongs to the DsbB family.

It localises to the cell inner membrane. In terms of biological role, required for disulfide bond formation in some periplasmic proteins. Acts by oxidizing the DsbA protein. The protein is Disulfide bond formation protein B 1 of Pseudomonas fluorescens (strain Pf0-1).